A 374-amino-acid polypeptide reads, in one-letter code: PqqA peptide cyclase (374 aa).

The region spanning 13-230 (VPAPIAMLAE…EAEARLRGTL (218 aa)) is the Radical SAM core domain. [4Fe-4S] cluster is bound by residues Cys27, Cys31, and Cys34.

This sequence belongs to the radical SAM superfamily. PqqE family. Interacts with PqqD. The interaction is necessary for activity of PqqE. [4Fe-4S] cluster is required as a cofactor.

The enzyme catalyses [PQQ precursor protein] + S-adenosyl-L-methionine = E-Y cross-linked-[PQQ precursor protein] + 5'-deoxyadenosine + L-methionine + H(+). The protein operates within cofactor biosynthesis; pyrroloquinoline quinone biosynthesis. Catalyzes the cross-linking of a glutamate residue and a tyrosine residue in the PqqA protein as part of the biosynthesis of pyrroloquinoline quinone (PQQ). The sequence is that of PqqA peptide cyclase from Ruegeria pomeroyi (strain ATCC 700808 / DSM 15171 / DSS-3) (Silicibacter pomeroyi).